The sequence spans 82 residues: Sec-independent protein translocase protein TatA (82 aa).

A helical membrane pass occupies residues 1–21; sequence MGGISIWQLLIIAVIVVLLFG.

This sequence belongs to the TatA/E family. In terms of assembly, the Tat system comprises two distinct complexes: a TatABC complex, containing multiple copies of TatA, TatB and TatC subunits, and a separate TatA complex, containing only TatA subunits. Substrates initially bind to the TatABC complex, which probably triggers association of the separate TatA complex to form the active translocon.

The protein localises to the cell inner membrane. In terms of biological role, part of the twin-arginine translocation (Tat) system that transports large folded proteins containing a characteristic twin-arginine motif in their signal peptide across membranes. TatA could form the protein-conducting channel of the Tat system. The sequence is that of Sec-independent protein translocase protein TatA from Vibrio cholerae serotype O1 (strain ATCC 39315 / El Tor Inaba N16961).